The sequence spans 70 residues: DNA gyrase inhibitor YacG (70 aa).

Zn(2+) is bound by residues Cys20, Cys23, Cys35, and Cys39.

The protein belongs to the DNA gyrase inhibitor YacG family. As to quaternary structure, interacts with GyrB. It depends on Zn(2+) as a cofactor.

Functionally, inhibits all the catalytic activities of DNA gyrase by preventing its interaction with DNA. Acts by binding directly to the C-terminal domain of GyrB, which probably disrupts DNA binding by the gyrase. The chain is DNA gyrase inhibitor YacG from Rhizobium etli (strain CIAT 652).